A 189-amino-acid chain; its full sequence is Protein Rex (189 aa).

A compositionally biased stretch (basic residues) spans 1–16 (MPKTRRRPRRSQRKRP). The tract at residues 1 to 27 (MPKTRRRPRRSQRKRPPTPWPTSQGLD) is disordered. Positions 2–18 (PKTRRRPRRSQRKRPPT) match the Nuclear localization signal, and RNA-binding (RxRE) motif. The tract at residues 56–70 (RPAYIVTPYWPPVQS) is homomultimerization. Position 70 is a phosphoserine; by host (serine 70). The disordered stretch occupies residues 73–189 (SPGTPSMDAL…PPSPGPSCPT (117 aa)). Residues 80–94 (DALSAQLYSSLSLDS) show a composition bias toward low complexity. The Nuclear export signal signature appears at 82-93 (LSAQLYSSLSLD). The segment at 123–131 (PSSRPCANT) is homomultimerization. Positions 143-164 (LGSTSQPCLFQTPDSGPKTCTP) are enriched in polar residues. At threonine 174 the chain carries Phosphothreonine; by host. Serine 177 bears the Phosphoserine; by host mark. Positions 178 to 189 (FPPPSPGPSCPT) are enriched in pro residues.

This sequence belongs to the deltaretrovirus Rex protein family. Homomultimer. Multimeric assembly is essential for activity and involves XPO1. Binds to human XPO1 and KPNB1. Interacts (via N-terminal nuclear localization signal) with human NPM1.

The protein resides in the host nucleus. The protein localises to the host nucleolus. It is found in the host cytoplasm. In terms of biological role, rex escorts unspliced gag-pro-pol and singly spliced env mRNAs out of the nucleus of infected cells. These mRNAs carry a recognition sequence called Rex responsive element (RxRE or XRE) located at the 3' region of the long terminal repeat (LTR). This function is essential since most HTLV proteins are translated from unspliced or partially spliced pre-mRNAs that cannot exit the nucleus by the pathway used by fully processed cellular mRNAs. Rex itself is translated from a fully spliced mRNA that probably readily exits the nucleus. Rex's nuclear localization signal (NLS) binds directly to KPNB1/importin beta-1 without previous binding to KPNA1/importin alpha-1. KPNB1 binds to the GDP bound form of RAN (Ran-GDP) and targets Rex to the nucleus. In the nucleus, the conversion from Ran-GDP to Ran-GTP dissociates Rex from KPNB1 and allows Rex's binding to the RRE in viral pre-mRNAs. Rex multimerizes on the RRE via cooperative assembly. This multimerization is critical for its full biological activity, since it may shield the viral RNA from being spliced or down-regulated, and probably exposes Rex's nuclear export signal (NES) to the surface. Rex can then form a complex with XPO1/CRM1, RANBP3 and Ran-GTP, leading to nuclear export of the complex. Conversion from Ran-GTP to Ran-GDP mediates dissociation of the Rex/RRE/XPO1/RANBP3/RAN complex, so that Rex can return to the nucleus for a subsequent round of export. This Human T-cell leukemia virus 1 (strain Japan ATK-1 subtype A) (HTLV-1) protein is Protein Rex.